The chain runs to 561 residues: Asparagine synthetase [glutamine-hydrolyzing] (561 aa).

C2 acts as the For GATase activity in catalysis. The Glutamine amidotransferase type-2 domain maps to 2–191; the sequence is CGIWALFGSD…PGHYEVLDLK (190 aa). L-glutamine is bound by residues 49 to 53, 75 to 77, and D97; these read RLAVV and NGE. The Asparagine synthetase domain occupies 213–536; sequence HALYDSVEKL…PGRADWLTHY (324 aa). ATP contacts are provided by residues L256, I288, and 363 to 364; that span reads SG. Position 385 is an N6-acetyllysine (K385). Position 545 is a phosphothreonine (T545). Phosphoserine is present on S557.

It carries out the reaction L-aspartate + L-glutamine + ATP + H2O = L-asparagine + L-glutamate + AMP + diphosphate + H(+). It participates in amino-acid biosynthesis; L-asparagine biosynthesis; L-asparagine from L-aspartate (L-Gln route): step 1/1. This is Asparagine synthetase [glutamine-hydrolyzing] (ASNS) from Mesocricetus auratus (Golden hamster).